The primary structure comprises 556 residues: Endonuclease/exonuclease/phosphatase family domain-containing protein 1 (556 aa).

In terms of domain architecture, HhH spans 39-68; sequence ERLNINTATEEELMTLPGVTRQVAQNIVEY.

In Xenopus laevis (African clawed frog), this protein is Endonuclease/exonuclease/phosphatase family domain-containing protein 1 (eepd1).